Reading from the N-terminus, the 461-residue chain is Phosphoglucosamine mutase (461 aa).

Ser-107 acts as the Phosphoserine intermediate in catalysis. Ser-107, Asp-254, Asp-256, and Asp-258 together coordinate Mg(2+). Ser-107 is subject to Phosphoserine.

Belongs to the phosphohexose mutase family. Mg(2+) is required as a cofactor. Activated by phosphorylation.

It carries out the reaction alpha-D-glucosamine 1-phosphate = D-glucosamine 6-phosphate. Functionally, catalyzes the conversion of glucosamine-6-phosphate to glucosamine-1-phosphate. This chain is Phosphoglucosamine mutase, found in Bifidobacterium longum subsp. infantis (strain ATCC 15697 / DSM 20088 / JCM 1222 / NCTC 11817 / S12).